Here is a 166-residue protein sequence, read N- to C-terminus: Large ribosomal subunit protein uL10 (166 aa).

It belongs to the universal ribosomal protein uL10 family. Part of the ribosomal stalk of the 50S ribosomal subunit. The N-terminus interacts with L11 and the large rRNA to form the base of the stalk. The C-terminus forms an elongated spine to which L12 dimers bind in a sequential fashion forming a multimeric L10(L12)X complex.

Forms part of the ribosomal stalk, playing a central role in the interaction of the ribosome with GTP-bound translation factors. In Streptococcus pneumoniae serotype 19F (strain G54), this protein is Large ribosomal subunit protein uL10.